Consider the following 160-residue polypeptide: Phosphopantetheine adenylyltransferase (160 aa).

Thr10 provides a ligand contact to substrate. ATP-binding positions include 10 to 11 (TF) and His18. 3 residues coordinate substrate: Lys42, Leu74, and Arg88. Residues 89–91 (GLR), Glu99, and 124–130 (NSFISST) contribute to the ATP site.

The protein belongs to the bacterial CoaD family. As to quaternary structure, homohexamer. It depends on Mg(2+) as a cofactor.

Its subcellular location is the cytoplasm. It catalyses the reaction (R)-4'-phosphopantetheine + ATP + H(+) = 3'-dephospho-CoA + diphosphate. Its pathway is cofactor biosynthesis; coenzyme A biosynthesis; CoA from (R)-pantothenate: step 4/5. Reversibly transfers an adenylyl group from ATP to 4'-phosphopantetheine, yielding dephospho-CoA (dPCoA) and pyrophosphate. The protein is Phosphopantetheine adenylyltransferase of Aeromonas hydrophila subsp. hydrophila (strain ATCC 7966 / DSM 30187 / BCRC 13018 / CCUG 14551 / JCM 1027 / KCTC 2358 / NCIMB 9240 / NCTC 8049).